Reading from the N-terminus, the 148-residue chain is uncharacterized protein (148 aa).

The helical transmembrane segment at 7–29 threads the bilayer; it reads MLILMSLVKIVLTCLPTGVIEWL.

It is found in the membrane. This is an uncharacterized protein from Bacillus subtilis (strain 168).